The following is a 299-amino-acid chain: Bifunctional protein FolD 2 (299 aa).

It belongs to the tetrahydrofolate dehydrogenase/cyclohydrolase family. Homodimer.

The catalysed reaction is (6R)-5,10-methylene-5,6,7,8-tetrahydrofolate + NADP(+) = (6R)-5,10-methenyltetrahydrofolate + NADPH. It catalyses the reaction (6R)-5,10-methenyltetrahydrofolate + H2O = (6R)-10-formyltetrahydrofolate + H(+). It functions in the pathway one-carbon metabolism; tetrahydrofolate interconversion. Catalyzes the oxidation of 5,10-methylenetetrahydrofolate to 5,10-methenyltetrahydrofolate and then the hydrolysis of 5,10-methenyltetrahydrofolate to 10-formyltetrahydrofolate. This is Bifunctional protein FolD 2 (FOLD2) from Arabidopsis thaliana (Mouse-ear cress).